The chain runs to 803 residues: Homeobox protein Wariai (803 aa).

The segment covering Ser-23 to Tyr-41 has biased composition (polar residues). The tract at residues Ser-23–Ser-144 is disordered. The span at Asn-42–Asn-124 shows a compositional bias: low complexity. Over residues Gln-125–Tyr-138 the composition is skewed to polar residues. Residues Ser-162–Glu-221 constitute a DNA-binding region (homeobox). The disordered stretch occupies residues Ile-288 to Gly-330. The span at Asn-291–Ser-302 shows a compositional bias: gly residues. A compositionally biased stretch (basic residues) spans His-303–Asn-322. 9 ANK repeats span residues Lys-374–Ile-403, Gln-407–Leu-436, Glu-440–Val-469, Asn-474–Val-503, Asn-507–Ala-536, Asp-540–Ile-569, Glu-573–Ile-602, Asn-606–Ala-636, and Gln-642–Ile-671. The tract at residues Lys-695–Asp-760 is disordered. Positions Ser-696–Asn-746 are enriched in low complexity.

The protein resides in the nucleus. Its function is as follows. Putative transcription factor, that seems to be involved in anterior-posterior patterning of the slug, probably by controlling the proportions of prestalk and prespore cells. This Dictyostelium discoideum (Social amoeba) protein is Homeobox protein Wariai (warA).